Here is a 155-residue protein sequence, read N- to C-terminus: S-ribosylhomocysteine lyase (155 aa).

Residues His58, His62, and Cys125 each coordinate Fe cation.

It belongs to the LuxS family. In terms of assembly, homodimer. The cofactor is Fe cation.

The catalysed reaction is S-(5-deoxy-D-ribos-5-yl)-L-homocysteine = (S)-4,5-dihydroxypentane-2,3-dione + L-homocysteine. Its function is as follows. Involved in the synthesis of autoinducer 2 (AI-2) which is secreted by bacteria and is used to communicate both the cell density and the metabolic potential of the environment. The regulation of gene expression in response to changes in cell density is called quorum sensing. Catalyzes the transformation of S-ribosylhomocysteine (RHC) to homocysteine (HC) and 4,5-dihydroxy-2,3-pentadione (DPD). In Helicobacter pylori (strain P12), this protein is S-ribosylhomocysteine lyase.